Reading from the N-terminus, the 214-residue chain is Phosphatidylcholine transfer protein (214 aa).

Methionine 1 carries the N-acetylmethionine modification. The region spanning 1 to 212 (MELAAGSFSE…MARACQNYLK (212 aa)) is the START domain. Residues tyrosine 72 and arginine 78 each coordinate a 1,2-diacyl-sn-glycero-3-phosphocholine. The residue at position 139 (serine 139) is a Phosphoserine. Residue glutamine 157 participates in a 1,2-diacyl-sn-glycero-3-phosphocholine binding.

As to quaternary structure, interacts with ACOT13/THEM2. As to expression, highest expression in liver, placenta, testis, kidney and heart. Low levels in brain and lung. No expression detected in thymus.

Its subcellular location is the cytoplasm. Its function is as follows. Catalyzes the transfer of phosphatidylcholine between membranes. Binds a single lipid molecule. In Homo sapiens (Human), this protein is Phosphatidylcholine transfer protein (PCTP).